The following is a 120-amino-acid chain: Chaperonin GroEL (120 aa).

An ATP-binding site is contributed by 23-27 (DGTTT).

This sequence belongs to the chaperonin (HSP60) family. As to quaternary structure, forms a cylinder of 14 subunits composed of two heptameric rings stacked back-to-back. Interacts with the co-chaperonin GroES.

Its subcellular location is the cytoplasm. It carries out the reaction ATP + H2O + a folded polypeptide = ADP + phosphate + an unfolded polypeptide.. Functionally, together with its co-chaperonin GroES, plays an essential role in assisting protein folding. The GroEL-GroES system forms a nano-cage that allows encapsulation of the non-native substrate proteins and provides a physical environment optimized to promote and accelerate protein folding. This chain is Chaperonin GroEL, found in Mycobacterium gordonae.